Reading from the N-terminus, the 96-residue chain is Phosphoribosyl-ATP pyrophosphatase (96 aa).

This sequence belongs to the PRA-PH family.

It is found in the cytoplasm. It carries out the reaction 1-(5-phospho-beta-D-ribosyl)-ATP + H2O = 1-(5-phospho-beta-D-ribosyl)-5'-AMP + diphosphate + H(+). The protein operates within amino-acid biosynthesis; L-histidine biosynthesis; L-histidine from 5-phospho-alpha-D-ribose 1-diphosphate: step 2/9. This chain is Phosphoribosyl-ATP pyrophosphatase, found in Methanobrevibacter smithii (strain ATCC 35061 / DSM 861 / OCM 144 / PS).